A 96-amino-acid chain; its full sequence is Phosphoribosyl-ATP pyrophosphatase (96 aa).

This sequence belongs to the PRA-PH family.

The protein localises to the cytoplasm. The catalysed reaction is 1-(5-phospho-beta-D-ribosyl)-ATP + H2O = 1-(5-phospho-beta-D-ribosyl)-5'-AMP + diphosphate + H(+). It participates in amino-acid biosynthesis; L-histidine biosynthesis; L-histidine from 5-phospho-alpha-D-ribose 1-diphosphate: step 2/9. The chain is Phosphoribosyl-ATP pyrophosphatase from Methanococcus vannielii (strain ATCC 35089 / DSM 1224 / JCM 13029 / OCM 148 / SB).